Reading from the N-terminus, the 148-residue chain is MCPPVRQHPAQAPPAKRQALETVPHPQNRGRLMSPKARPPKMQRRPRPPVAKRRRFPRSPQQVERPILPPVESTPQDMEPGQVQSPPQITAVIQLRQDRDTMRPPIYLPALLANCGPAGLLRAHRLPQPKPPCQSRQRPSPDSQTSPC.

Disordered stretches follow at residues 1–86 (MCPP…VQSP) and 122–148 (RAHRLPQPKPPCQSRQRPSPDSQTSPC). Residues 38–57 (RPPKMQRRPRPPVAKRRRFP) show a composition bias toward basic residues. The span at 134 to 148 (QSRQRPSPDSQTSPC) shows a compositional bias: polar residues.

Belongs to the Epstein-Barr virus BLLF2 family.

This is an uncharacterized protein from Homo sapiens (Human).